Consider the following 208-residue polypeptide: T-cell surface glycoprotein CD8 beta chain (208 aa).

The N-terminal stretch at Met-1–Ala-21 is a signal peptide. The 110-residue stretch at Leu-22 to Leu-131 folds into the Ig-like V-type domain. The Extracellular segment spans residues Leu-22–Leu-168. N-linked (GlcNAc...) asparagine glycans are attached at residues Asn-34, Asn-88, and Asn-94. A disulfide bridge links Cys-41 with Cys-115. A helical membrane pass occupies residues Ile-169 to Ile-189. Residues His-190–Lys-208 are Cytoplasmic-facing.

Forms disulfide-linked heterodimers with CD8A at the cell surface. Interacts with CD3D; this interaction couples TCR-CD3 with CD8. Interacts with LCK. Post-translationally, phosphorylated as a consequence of T-cell activation. Palmitoylated at the cytoplasmic tail and thereby targets the heterodimer CD8A/CD8B to lipid rafts unlike CD8A homodimers.

The protein resides in the cell membrane. Integral membrane glycoprotein that plays an essential role in the immune response and serves multiple functions in responses against both external and internal offenses. In T-cells, functions primarily as a coreceptor for MHC class I molecule:peptide complex. The antigens presented by class I peptides are derived from cytosolic proteins while class II derived from extracellular proteins. Interacts simultaneously with the T-cell receptor (TCR) and the MHC class I proteins presented by antigen presenting cells (APCs). In turn, recruits the Src kinase LCK to the vicinity of the TCR-CD3 complex. A palmitoylation site in the cytoplasmic tail of CD8B chain contributes to partitioning of CD8 into the plasma membrane lipid rafts where signaling proteins are enriched. Once LCK recruited, it initiates different intracellular signaling pathways by phosphorylating various substrates ultimately leading to lymphokine production, motility, adhesion and activation of cytotoxic T-lymphocytes (CTLs). Additionally, plays a critical role in thymic selection of CD8+ T-cells. This chain is T-cell surface glycoprotein CD8 beta chain (Cd8b), found in Rattus norvegicus (Rat).